The following is a 500-amino-acid chain: Galactofuranose transporter ATP-binding protein YtfR (500 aa).

ABC transporter domains are found at residues 10-245 (LRTE…LGRE) and 259-497 (LSDK…IMNA). 42 to 49 (GENGAGKS) provides a ligand contact to ATP.

It belongs to the ABC transporter superfamily. In terms of assembly, the complex is composed of two ATP-binding proteins (YtfR), two transmembrane proteins (YtfT and YjfF) and a solute-binding protein (YtfQ).

The protein localises to the cell inner membrane. The catalysed reaction is D-galactofuranose(out) + ATP + H2O = D-galactofuranose(in) + ADP + phosphate + H(+). Functionally, part of the ABC transporter complex YtfQRT-YjfF involved in galactofuranose transport. Responsible for energy coupling to the transport system. The polypeptide is Galactofuranose transporter ATP-binding protein YtfR (ytfR) (Escherichia coli O157:H7).